The following is an 81-amino-acid chain: ATP synthase subunit c (81 aa).

Helical transmembrane passes span 14 to 34 and 60 to 80; these read YLGA…IGTV and LAFA…LLFV.

The protein belongs to the ATPase C chain family. In terms of assembly, F-type ATPases have 2 components, F(1) - the catalytic core - and F(0) - the membrane proton channel. F(1) has five subunits: alpha(3), beta(3), gamma(1), delta(1), epsilon(1). F(0) has three main subunits: a(1), b(2) and c(10-14). The alpha and beta chains form an alternating ring which encloses part of the gamma chain. F(1) is attached to F(0) by a central stalk formed by the gamma and epsilon chains, while a peripheral stalk is formed by the delta and b chains.

It localises to the cell membrane. F(1)F(0) ATP synthase produces ATP from ADP in the presence of a proton or sodium gradient. F-type ATPases consist of two structural domains, F(1) containing the extramembraneous catalytic core and F(0) containing the membrane proton channel, linked together by a central stalk and a peripheral stalk. During catalysis, ATP synthesis in the catalytic domain of F(1) is coupled via a rotary mechanism of the central stalk subunits to proton translocation. In terms of biological role, key component of the F(0) channel; it plays a direct role in translocation across the membrane. A homomeric c-ring of between 10-14 subunits forms the central stalk rotor element with the F(1) delta and epsilon subunits. This Clostridium acetobutylicum (strain ATCC 824 / DSM 792 / JCM 1419 / IAM 19013 / LMG 5710 / NBRC 13948 / NRRL B-527 / VKM B-1787 / 2291 / W) protein is ATP synthase subunit c.